A 260-amino-acid chain; its full sequence is 4-hydroxy-tetrahydrodipicolinate reductase (260 aa).

12–17 (GFRGKM) serves as a coordination point for NAD(+). Lys-40 serves as a coordination point for NADP(+). Residues 92–94 (GTT) and 118–121 (APNF) each bind NAD(+). The Proton donor/acceptor role is filled by His-148. His-149 contacts (S)-2,3,4,5-tetrahydrodipicolinate. Residue Lys-152 is the Proton donor of the active site. 158-159 (GT) provides a ligand contact to (S)-2,3,4,5-tetrahydrodipicolinate.

It belongs to the DapB family.

It localises to the cytoplasm. It carries out the reaction (S)-2,3,4,5-tetrahydrodipicolinate + NAD(+) + H2O = (2S,4S)-4-hydroxy-2,3,4,5-tetrahydrodipicolinate + NADH + H(+). It catalyses the reaction (S)-2,3,4,5-tetrahydrodipicolinate + NADP(+) + H2O = (2S,4S)-4-hydroxy-2,3,4,5-tetrahydrodipicolinate + NADPH + H(+). It participates in amino-acid biosynthesis; L-lysine biosynthesis via DAP pathway; (S)-tetrahydrodipicolinate from L-aspartate: step 4/4. Catalyzes the conversion of 4-hydroxy-tetrahydrodipicolinate (HTPA) to tetrahydrodipicolinate. The sequence is that of 4-hydroxy-tetrahydrodipicolinate reductase from Lactococcus lactis subsp. lactis (strain IL1403) (Streptococcus lactis).